Reading from the N-terminus, the 382-residue chain is Mannitol-1-phosphate 5-dehydrogenase (382 aa).

3 to 14 (ALHFGAGNIGRG) is an NAD(+) binding site. Residue Lys-269 is modified to N6-acetyllysine.

This sequence belongs to the mannitol dehydrogenase family.

The enzyme catalyses D-mannitol 1-phosphate + NAD(+) = beta-D-fructose 6-phosphate + NADH + H(+). The sequence is that of Mannitol-1-phosphate 5-dehydrogenase from Shigella sonnei (strain Ss046).